Reading from the N-terminus, the 343-residue chain is Thioredoxin domain-containing protein 15 (343 aa).

The first 20 residues, 1-20 (MQLLCWWQILLWVLGLPARG), serve as a signal peptide directing secretion. The Extracellular segment spans residues 21–304 (LEEDSGHTWQ…GPLPSTLVKT (284 aa)). The span at 86 to 95 (EDQRSTEAHD) shows a compositional bias: basic and acidic residues. A disordered region spans residues 86 to 112 (EDQRSTEAHDGTCSAQGDEDPRCGGRE). In terms of domain architecture, Thioredoxin spans 162–279 (ERNVTGLENF…LKIFIFNQTG (118 aa)). 4 N-linked (GlcNAc...) asparagine glycosylation sites follow: asparagine 170, asparagine 177, asparagine 189, and asparagine 276. A helical membrane pass occupies residues 305 to 325 (VDWLLVFSLFFLISFIMYATI). Over 326–343 (RTESIRWLIPGQEQEHAE) the chain is Cytoplasmic.

The protein localises to the cell projection. It is found in the cilium membrane. Acts as a positive regulator of ciliary hedgehog signaling. Required for cilia biogenesis. The chain is Thioredoxin domain-containing protein 15 (Txndc15) from Rattus norvegicus (Rat).